The sequence spans 445 residues: tRNA modification GTPase MnmE (445 aa).

Positions 20, 79, and 119 each coordinate (6S)-5-formyl-5,6,7,8-tetrahydrofolate. Positions 215–371 (GLKLAIIGPP…ILKNIENIAE (157 aa)) constitute a TrmE-type G domain. N225 is a binding site for K(+). GTP-binding positions include 225–230 (NTGKSS), 244–250 (SNIAGTT), and 269–272 (DTAG). Mg(2+) is bound at residue S229. K(+) contacts are provided by S244, I246, and T249. T250 provides a ligand contact to Mg(2+). A (6S)-5-formyl-5,6,7,8-tetrahydrofolate-binding site is contributed by K445.

The protein belongs to the TRAFAC class TrmE-Era-EngA-EngB-Septin-like GTPase superfamily. TrmE GTPase family. Homodimer. Heterotetramer of two MnmE and two MnmG subunits. Requires K(+) as cofactor.

The protein resides in the cytoplasm. Functionally, exhibits a very high intrinsic GTPase hydrolysis rate. Involved in the addition of a carboxymethylaminomethyl (cmnm) group at the wobble position (U34) of certain tRNAs, forming tRNA-cmnm(5)s(2)U34. The polypeptide is tRNA modification GTPase MnmE (Rickettsia typhi (strain ATCC VR-144 / Wilmington)).